Here is a 320-residue protein sequence, read N- to C-terminus: Peptidase 1 (320 aa).

The first 18 residues, 1–18, serve as a signal peptide directing secretion; sequence MKIVLAIASLLALSAVYA. Residues 19–98 constitute a propeptide, activation peptide; sequence RPSSIKTFEE…LKTQFDLNAE (80 aa). 3 disulfides stabilise this stretch: Cys102–Cys215, Cys129–Cys169, and Cys163–Cys201. Cys132 is a catalytic residue. Asn150 carries N-linked (GlcNAc...) asparagine glycosylation. Catalysis depends on residues His268 and Asn288.

Belongs to the peptidase C1 family. Post-translationally, N-glycosylated. N-glycanase treatment does not completely remove carbohydrates, suggesting that the protein contains additional glycosylation sites.

The protein resides in the secreted. It catalyses the reaction Broad endopeptidase specificity.. Functionally, thiol protease, with a preference for substrates with a large hydrophobic side chain in the P2 position, or with basic residues. This is Peptidase 1 (DERP1) from Dermatophagoides pteronyssinus (European house dust mite).